The chain runs to 316 residues: Polyprenyl transferase dpchC (316 aa).

8 helical membrane passes run 24–44 (PLFT…AKMA), 60–80 (ALCF…NDWI), 105–125 (EAMV…EVML), 154–174 (MLGI…AVIG), 192–212 (CLPL…AYSY), 234–254 (IHLL…IYLF), 258–278 (SLWL…QQLV), and 296–316 (FILG…TGSA).

This sequence belongs to the UbiA prenyltransferase family. It depends on Mg(2+) as a cofactor.

It localises to the membrane. It participates in secondary metabolite biosynthesis; terpenoid biosynthesis. Polyprenyl transferase; part of the gene cluster that mediates the biosynthesis of the diterpenoid pyrones higginsianins A and B. The first step of the pathway is the synthesis of the alpha-pyrone moiety by the polyketide synthase dpchA via condensation of one acetyl-CoA starter unit with 3 malonyl-CoA units and 2 methylations. The alpha-pyrone is then combined with geranylgeranyl pyrophosphate (GGPP) formed by the GGPP synthase dpchD through the action of the prenyltransferase dpchC to yield a linear alpha-pyrone diterpenoid. Subsequent steps in the diterpenoid pyrone biosynthetic pathway involve the decalin core formation, which is initiated by the epoxidation of the C10-C11 olefin by the FAD-dependent oxidoreductase dpchE, and is followed by a cyclization cascade catalyzed by the terpene cyclase dpchB. The short chain dehydrogenase/reductase dpchG then oxidizes the 8S hydroxy group to a ketone and the short chain dehydrogenase/reductase dpchH reduces the ketone to the 8R hydroxy group to yield higginsianin B. Finally, the FAD-dependent oxidoreductase dpchF converts higginsianin B into higginsianin A. The protein is Polyprenyl transferase dpchC of Colletotrichum higginsianum (strain IMI 349063) (Crucifer anthracnose fungus).